We begin with the raw amino-acid sequence, 696 residues long: Polyribonucleotide nucleotidyltransferase (696 aa).

2 residues coordinate Mg(2+): aspartate 486 and aspartate 492. A KH domain is found at 553–612; the sequence is PRITQKQIPKDRIGELIGPGGKMIRAIIEQSGSEISVDDSGKVTIASPSEESKEKAIAMI. An S1 motif domain is found at 622–690; sequence GKIYDGVIKR…KMGKIDLSRK (69 aa).

The protein belongs to the polyribonucleotide nucleotidyltransferase family. It depends on Mg(2+) as a cofactor.

It is found in the cytoplasm. The enzyme catalyses RNA(n+1) + phosphate = RNA(n) + a ribonucleoside 5'-diphosphate. Its function is as follows. Involved in mRNA degradation. Catalyzes the phosphorolysis of single-stranded polyribonucleotides processively in the 3'- to 5'-direction. The chain is Polyribonucleotide nucleotidyltransferase from Leptospira biflexa serovar Patoc (strain Patoc 1 / ATCC 23582 / Paris).